The primary structure comprises 336 residues: F420-dependent glucose-6-phosphate dehydrogenase (336 aa).

Asp-39 contributes to the coenzyme F420-(gamma-Glu)n binding site. His-40 acts as the Proton donor in catalysis. Coenzyme F420-(gamma-Glu)n is bound by residues Thr-76 and 107-108 (SG). The Proton acceptor role is filled by Glu-109. Coenzyme F420-(gamma-Glu)n contacts are provided by residues Asn-112, 177-178 (GG), and 180-181 (VV). Substrate contacts are provided by Thr-195, Lys-198, Lys-259, and Arg-283.

The protein belongs to the F420-dependent glucose-6-phosphate dehydrogenase family. Homodimer.

The catalysed reaction is oxidized coenzyme F420-(gamma-L-Glu)(n) + D-glucose 6-phosphate + H(+) = 6-phospho-D-glucono-1,5-lactone + reduced coenzyme F420-(gamma-L-Glu)(n). Functionally, catalyzes the coenzyme F420-dependent oxidation of glucose 6-phosphate (G6P) to 6-phosphogluconolactone. This Tsukamurella paurometabola (strain ATCC 8368 / DSM 20162 / CCUG 35730 / CIP 100753 / JCM 10117 / KCTC 9821 / NBRC 16120 / NCIMB 702349 / NCTC 13040) (Corynebacterium paurometabolum) protein is F420-dependent glucose-6-phosphate dehydrogenase.